The sequence spans 241 residues: dTTP/UTP pyrophosphatase (241 aa).

Ser38 carries the post-translational modification Phosphoserine. The Proton acceptor role is filled by Asp105.

The protein belongs to the Maf family. YhdE subfamily. It depends on a divalent metal cation as a cofactor.

The protein localises to the cytoplasm. It localises to the nucleus. It carries out the reaction dTTP + H2O = dTMP + diphosphate + H(+). The enzyme catalyses UTP + H2O = UMP + diphosphate + H(+). Its function is as follows. Nucleoside triphosphate pyrophosphatase that hydrolyzes dTTP and UTP. May have a dual role in cell division arrest and in preventing the incorporation of modified nucleotides into cellular nucleic acids. The sequence is that of dTTP/UTP pyrophosphatase from Schizosaccharomyces pombe (strain 972 / ATCC 24843) (Fission yeast).